We begin with the raw amino-acid sequence, 228 residues long: Lipoprotein-releasing system ATP-binding protein LolD (228 aa).

Positions 6–228 (IKCINLNKSY…ENNQIFNYES (223 aa)) constitute an ABC transporter domain. An ATP-binding site is contributed by 42–49 (GKSGSGKT).

Belongs to the ABC transporter superfamily. Lipoprotein translocase (TC 3.A.1.125) family.

It localises to the cell inner membrane. Its function is as follows. Usually LolD forms an ABC transporter complex with LolC and LolE involved in the translocation of lipoprotein, in an ATP-dependent manner. However, LolE is certainly not functional as it is frameshifted. The protein is Lipoprotein-releasing system ATP-binding protein LolD of Buchnera aphidicola subsp. Acyrthosiphon pisum (strain APS) (Acyrthosiphon pisum symbiotic bacterium).